A 334-amino-acid chain; its full sequence is MATIKDVARLAGVSTTTVSHVINKTRFVAEATQEKVMKAVDELNYAPSAVARSLKCNSTRTIGMLVTQSTNLFFSEVIDGVESYCYRQGYTLILCNTGGIYEKQRDYIRMLAEKRVDGILVMCSDLTEELKEMLDRHSDIPKVVMDWGPESSRADKIIDNSEEGGYLATKYLIDNGHTDIACLSGHFEKLACQERIAGFRRAMAEAKLPINEDWILEGNFECDTAVLVADKITAMEKRPTAVFCFNDTMALGLMSRLQQNGIKVPDDVSVIGYDNIELAEYFSPPLTTIHQPKRRVGKNAFEILLERIKDKEHEKRVFEMQPEIVIRNTVKKLN.

The HTH lacI-type domain maps to 2-56 (ATIKDVARLAGVSTTTVSHVINKTRFVAEATQEKVMKAVDELNYAPSAVARSLKC). A DNA-binding region (H-T-H motif) is located at residues 4 to 23 (IKDVARLAGVSTTTVSHVIN). Residues 48–56 (SAVARSLKC) mediate DNA binding. The hypoxanthine site is built by F73, K189, F220, and D274.

In terms of assembly, homodimer.

Its pathway is purine metabolism; purine nucleotide biosynthesis [regulation]. Its function is as follows. Is the main repressor of the genes involved in the de novo synthesis of purine nucleotides, regulating purB, purC, purEK, purF, purHD, purL, purMN and guaBA expression. PurR is allosterically activated to bind its cognate DNA by binding the purine corepressors, hypoxanthine or guanine, thereby effecting transcription repression. This Vibrio parahaemolyticus serotype O3:K6 (strain RIMD 2210633) protein is HTH-type transcriptional repressor PurR.